Reading from the N-terminus, the 151-residue chain is MTLEDKIENLLRPTIETMGFQFWGCEYLPAGKHSTLRIYIDKDEVGVTVDDCGKVSRQVSAIMDVEDPISNAYMLEVSSPGMDRPLFHPEQYKAYEGQEVQVRTSSPVMGRKRFKGVMSQVSESDIAVEVDGELYEIPFSLIDKANVVPQF.

Belongs to the RimP family.

Its subcellular location is the cytoplasm. In terms of biological role, required for maturation of 30S ribosomal subunits. This is Ribosome maturation factor RimP from Hydrogenovibrio crunogenus (strain DSM 25203 / XCL-2) (Thiomicrospira crunogena).